The following is a 1128-amino-acid chain: MAEEESDQEAERLGEELVAIVESPLGPVGLRAAGDGRGGAGSGNCGGGVGISSRDYCRRFCQVVEDYAGRWQVPLPQLQVLQTALCCFTTASASFPDECEHVQYVLSSLAVSFFELLLFFGRDEFYEEPLKDILGSFQECQNHLRRYGNVNLELVTRIIRDGGPWEDPVLQAVLKAQPASQEIVNKYLSSENPLFFELRARYLIACERIPEAMALIKSCINHPEISKDLYFHQALFTCLFMSPVEDQLFREHLLKTDCKSGIDIICNAEKEGKTMLALQLCESFLIPQLQNGDMYCIWELIFIWSKLQLKSNPSKQVFVDQCYQLLRTATNVRVIFPFMKIIKDEVEEEGLQICVEICGCALQLDLHDDPKTKCLIYKTIAHFLPNDLEILRICALSIFFLERSLEAYRTVEELYKRPDEEYNEGTSSVQNRVRFELLPILKKGLFFDPEFWNFVMIKKNCVALLSDKSAVRFLNESTLENNAGNLKRTEEQQGLDEGFDSLTDQSTGETDPDDVSGVQPKGHINTKKNLTALSTSKVDHNVPRHRCMLCNKEFLGGHIVRHAQAHQKKGSFACVICGRKFRNRGLMQKHLKNHVKKIQRQQIAAAQQDDQEVTALEEINCSSSSISFENGNSDSKDLEVETLTASSEGNKEVIPEHVAEFIEIPISVPEDVIENVIENGSPNNSLNNVFKPLTECGDDYEEEEDEEGDYEEDDYDLNQETSVIHKINGTVCHPKDIYATDQEGNFKCPALGCVRIFKRIGFLNKHAMTVHPTDLNVRQTVMKWSKGKCKFCQRQFEDSQHFIDHLNRHSYPNVYFCLHFNCNESFKLPFQLAQHTKSHRIFQAQCSFPECHELFEDLPLLYEHEAQHYLSKTPESSAQPSETILWDVQTDSNPNQEKDSSSNEKQTISLPVSTSKSRKESTEPKTCIESMEKKTDSLVQNGNERSDDTVSNISLIDQKMPDIEPNSENNCSSSDIVNGHSEIEQTPLVSSDPALKIDTNRIRTENGSILPSVVPQEHNTLPVSQAPSKPNLTSEHTSYGLILTKPYVRPLPPSYLDERYLSMPKRRKFLTDRVDACSDQDNVYKKSVKRLRCGKCLTTYCNAEALEAHLAQKKCQTLFGFDSDDESA.

The disordered stretch occupies residues 498–523 (GFDSLTDQSTGETDPDDVSGVQPKGH). C2H2-type zinc fingers lie at residues 572–594 (FACVICGRKFRNRGLMQKHLKNH), 746–771 (FKCPALGCVRIFKRIGFLNKHAMTVH), 787–809 (GKCKFCQRQFEDSQHFIDHLNRH), 815–839 (YFCLHFNCNESFKLPFQLAQHTKSH), and 844–868 (AQCSFPECHELFEDLPLLYEHEAQH). Residues 891–951 (DSNPNQEKDS…GNERSDDTVS (61 aa)) are disordered. Polar residues-rich tracts occupy residues 903-915 (NEKQTISLPVSTS) and 937-951 (SLVQNGNERSDDTVS). Phosphoserine is present on residues serine 1123 and serine 1127.

This sequence belongs to the krueppel C2H2-type zinc-finger protein family.

The protein localises to the nucleus. May be involved in transcriptional regulation. The sequence is that of Zinc finger protein 654 from Homo sapiens (Human).